The primary structure comprises 227 residues: Cytochrome c oxidase subunit 2 (227 aa).

The Mitochondrial intermembrane segment spans residues 1-14; it reads MAYPAQMGFQDATS. Residues 15–45 form a helical membrane-spanning segment; sequence PIMEELLYFHDHTLMIVFMISSLVLYTISLM. Topologically, residues 46 to 59 are mitochondrial matrix; it reads LTTSLTHTNTMNAQ. The helical transmembrane segment at 60 to 87 threads the bilayer; the sequence is EVETVWTILPAIICILIALPSLRILYMM. Residues 88–227 lie on the Mitochondrial intermembrane side of the membrane; sequence DEINNPSLTI…YFEKWLLTML (140 aa). Cu cation is bound by residues histidine 161, cysteine 196, glutamate 198, cysteine 200, histidine 204, and methionine 207. Glutamate 198 serves as a coordination point for Mg(2+). Tyrosine 218 is subject to Phosphotyrosine.

This sequence belongs to the cytochrome c oxidase subunit 2 family. In terms of assembly, component of the cytochrome c oxidase (complex IV, CIV), a multisubunit enzyme composed of 14 subunits. The complex is composed of a catalytic core of 3 subunits MT-CO1, MT-CO2 and MT-CO3, encoded in the mitochondrial DNA, and 11 supernumerary subunits COX4I, COX5A, COX5B, COX6A, COX6B, COX6C, COX7A, COX7B, COX7C, COX8 and NDUFA4, which are encoded in the nuclear genome. The complex exists as a monomer or a dimer and forms supercomplexes (SCs) in the inner mitochondrial membrane with NADH-ubiquinone oxidoreductase (complex I, CI) and ubiquinol-cytochrome c oxidoreductase (cytochrome b-c1 complex, complex III, CIII), resulting in different assemblies (supercomplex SCI(1)III(2)IV(1) and megacomplex MCI(2)III(2)IV(2)). Found in a complex with TMEM177, COA6, COX18, COX20, SCO1 and SCO2. Interacts with TMEM177 in a COX20-dependent manner. Interacts with COX20. Interacts with COX16. Requires Cu cation as cofactor.

It localises to the mitochondrion inner membrane. The catalysed reaction is 4 Fe(II)-[cytochrome c] + O2 + 8 H(+)(in) = 4 Fe(III)-[cytochrome c] + 2 H2O + 4 H(+)(out). Functionally, component of the cytochrome c oxidase, the last enzyme in the mitochondrial electron transport chain which drives oxidative phosphorylation. The respiratory chain contains 3 multisubunit complexes succinate dehydrogenase (complex II, CII), ubiquinol-cytochrome c oxidoreductase (cytochrome b-c1 complex, complex III, CIII) and cytochrome c oxidase (complex IV, CIV), that cooperate to transfer electrons derived from NADH and succinate to molecular oxygen, creating an electrochemical gradient over the inner membrane that drives transmembrane transport and the ATP synthase. Cytochrome c oxidase is the component of the respiratory chain that catalyzes the reduction of oxygen to water. Electrons originating from reduced cytochrome c in the intermembrane space (IMS) are transferred via the dinuclear copper A center (CU(A)) of subunit 2 and heme A of subunit 1 to the active site in subunit 1, a binuclear center (BNC) formed by heme A3 and copper B (CU(B)). The BNC reduces molecular oxygen to 2 water molecules using 4 electrons from cytochrome c in the IMS and 4 protons from the mitochondrial matrix. The chain is Cytochrome c oxidase subunit 2 (MT-CO2) from Daubentonia madagascariensis (Aye-aye).